The primary structure comprises 931 residues: MKASSGRCGLVRWLQVLLPFLLSLFPGALPVQIRYSIPEELAKNSVVGNLAKDLGLSVRDLPARKLRVSAEKEYFTVNPESGDLLVSDRIDREQICGKQPLCVLDFDTVAENPLNIFYIAVIVQDINDNTPLFKQTKINLKIGESTKPGTTFPLDPALDSDVGPNSLQRYHLNDNEYFDLAEKQTPDGRKYPELILKHSLDREEHSLHQLVLTAVDGGDPPQSGTTQIRIKVTDANDNPPVFSQDVYRVTLREDVPPGFFVLQVTATDRDEGINAEITYSFHNVDEQVKHFFNLNEKTGEITTKDDLDFEIASSYTLSIEAKDPGDLAAHCSIQVEILDDNDCAPEVIVTSVSTPLPEDSPPGTVIALIKTRDRDSGENGEVYCQVLGNAKFILKSSSKNYYKLVTDGALDREEIPEYNLTITATDGGKPPLSSSIIVTLHISDVNDNAPVFQQTSYMVHVAENNPPGASIAQISASDPDLGPSGQVSYSIVASDLKPREILSYVSVSAQSGVVFAQRAFDHEQLRAFELTLQARDQGSPALSANVSLRVLVGDLNDNAPRVLYPALGPDGSALFDMVPRAAEPGYLVTKVVAVDADSGHNAWLSYHVLQASEPGLFSLGLRTGEVRTARALGDRDAARQRLLVAVRDGGQPPLSATATLHLIFADSLQEVLPDLSDRREPSDPQAKLQFYLVVALALISVLFFLAVILAISLRLRLSSRSDAWDCFQPGLSSKPGPGVLPNYSEGTLPYSYNLCVASQSAKTEFNFLNITPELVPAQDLVCDNASWEQNTNHGAAGVPFASDTILKQAPPNTDWRFSQAQRPGTSGSQNGDDTGTWPNNQFDTEMLQAMILASASEAADGSSTLGGGAGTMGLSARYGPQFTLQHVPDYRQNVYIPGSNATLTNAAGKRDGKAPAGGNGNKKKSGKKEKK.

A signal peptide spans 1–30 (MKASSGRCGLVRWLQVLLPFLLSLFPGALP). Cadherin domains lie at 31-133 (VQIR…TPLF), 134-242 (KQTK…PPVF), 243-347 (SQDV…APEV), 348-452 (IVTS…APVF), 453-562 (QQTS…APRV), and 570-675 (DGSA…LPDL). At 31–691 (VQIRYSIPEE…SDPQAKLQFY (661 aa)) the chain is on the extracellular side. N-linked (GlcNAc...) asparagine glycosylation is found at Asn419 and Asn545. The helical transmembrane segment at 692 to 712 (LVVALALISVLFFLAVILAIS) threads the bilayer. Residues 713-931 (LRLRLSSRSD…KKKSGKKEKK (219 aa)) are Cytoplasmic-facing. Disordered stretches follow at residues 814 to 840 (DWRF…WPNN) and 901 to 931 (ATLT…KEKK). The span at 815-840 (WRFSQAQRPGTSGSQNGDDTGTWPNN) shows a compositional bias: polar residues. Positions 921–931 (NKKKSGKKEKK) are enriched in basic residues.

It is found in the cell membrane. Potential calcium-dependent cell-adhesion protein. May be involved in the establishment and maintenance of specific neuronal connections in the brain. This Homo sapiens (Human) protein is Protocadherin gamma-B2 (PCDHGB2).